The chain runs to 470 residues: Pyoverdine export outer membrane protein OpmQ (470 aa).

The signal sequence occupies residues 1-18 (MTLPRHLCLLPLSLSLLA). Cysteine 19 carries N-palmitoyl cysteine lipidation. Cysteine 19 carries the S-diacylglycerol cysteine lipid modification.

Belongs to the outer membrane factor (OMF) (TC 1.B.17) family. Part of the tripartite efflux system PvdRT-OpmQ, which is composed of an inner membrane component with both ATPase and permease domains, PvdT, a periplasmic membrane fusion protein, PvdR, and an outer membrane component, OpmQ.

It is found in the cell outer membrane. Its function is as follows. Part of the tripartite efflux system PvdRT-OpmQ required for the secretion into the extracellular milieu of the siderophore pyoverdine (PVD), which is involved in iron acquisition. The system is responsible for export of newly synthesized PVD after the final steps of biosynthesis have taken place in the periplasm. It is also responsible for recycling of PVD after internalization of ferri-PVD into the periplasm by the outer-membrane receptor FpvA and release of iron from PVD, thus making PVD available for new cycles of iron uptake. Contributes to resistance against ampicillin. The sequence is that of Pyoverdine export outer membrane protein OpmQ from Pseudomonas putida (strain ATCC 47054 / DSM 6125 / CFBP 8728 / NCIMB 11950 / KT2440).